The sequence spans 404 residues: AT-hook motif nuclear-localized protein 3 (404 aa).

Disordered regions lie at residues 1 to 51 (MEER…VPPT), 70 to 100 (PFSL…PDGT), and 113 to 133 (SVPL…GKSN). Over residues 7–19 (TNINNNITSSFGL) the composition is skewed to polar residues. Residues 35–51 (DPPPRPENPNPFLVPPT) show a composition bias toward pro residues. Residues 71 to 83 (FSLTMPTENTSAE) show a composition bias toward polar residues. A Bipartite nuclear localization signal motif is present at residues 86-94 (KKKRGRPRK). Residues 86–98 (KKKRGRPRKYNPD) constitute a DNA-binding region (a.T hook). Positions 123–133 (RKRGRGRGKSN) are enriched in basic residues. The 146-residue stretch at 163-308 (GANFTPHVLI…RFGAQPSSIS (146 aa)) folds into the PPC domain. The disordered stretch occupies residues 359 to 404 (PFSSIPVGGGGGGEVGEEEGEEDDDELEGEDEEFGGDSQSDNEIPS). Residues 373-393 (VGEEEGEEDDDELEGEDEEFG) are compositionally biased toward acidic residues.

As to quaternary structure, homodimer. Interacts with AHL4. In terms of tissue distribution, expressed in both procambium and xylem precursors of the root meristem. Also detected in the endodermis in the late elongation zone and onwards.

The protein localises to the nucleus. Its function is as follows. Transcription factor that specifically binds AT-rich DNA sequences related to the nuclear matrix attachment regions (MARs). Acts redundantly with AHL4 to regulate the formation of tissue boundary between the xylem and procambium in the root meristem. The polypeptide is AT-hook motif nuclear-localized protein 3 (Arabidopsis thaliana (Mouse-ear cress)).